The primary structure comprises 237 residues: uncharacterized protein (237 aa).

Glu-91, Glu-93, and Asp-122 together coordinate a divalent metal cation.

Belongs to the FAH family.

This is an uncharacterized protein from Methanocaldococcus jannaschii (strain ATCC 43067 / DSM 2661 / JAL-1 / JCM 10045 / NBRC 100440) (Methanococcus jannaschii).